The following is a 96-amino-acid chain: Small ribosomal subunit protein bS16 (96 aa).

This sequence belongs to the bacterial ribosomal protein bS16 family.

The chain is Small ribosomal subunit protein bS16 from Anaplasma phagocytophilum (strain HZ).